The primary structure comprises 360 residues: DNA replication and repair protein RecF (360 aa).

An ATP-binding site is contributed by 33–40 (GENGSGKT).

This sequence belongs to the RecF family.

The protein resides in the cytoplasm. Its function is as follows. The RecF protein is involved in DNA metabolism; it is required for DNA replication and normal SOS inducibility. RecF binds preferentially to single-stranded, linear DNA. It also seems to bind ATP. The sequence is that of DNA replication and repair protein RecF from Rickettsia typhi (strain ATCC VR-144 / Wilmington).